The sequence spans 343 residues: CCN family member 3 (343 aa).

A signal peptide spans 1–18 (MTPHLALCFILLIQQVAS). The IGFBP N-terminal domain maps to 19–90 (QKCPSQCDQC…RMETGTCMAL (72 aa)). Intrachain disulfides connect Cys21–Cys46, Cys25–Cys48, Cys28–Cys49, Cys35–Cys52, Cys60–Cys74, and Cys66–Cys87. The VWFC domain maps to 93-159 (NSCVFDGVVY…GECCEKWVCD (67 aa)). The TSP type-1 domain occupies 190–235 (ACIAQTTEWSACSKTCGMGVSSRVTNRNARCEMQKQIRLCMVRSCE). Disulfide bonds link Cys249–Cys286, Cys266–Cys300, Cys277–Cys316, Cys280–Cys318, and Cys285–Cys322. Residues 249–323 (CVRVRKTTKP…STCVCHYNCP (75 aa)) enclose the CTCK domain. Residue Asn265 is glycosylated (N-linked (GlcNAc...) asparagine).

The protein belongs to the CCN family.

The protein localises to the secreted. The protein resides in the cytoplasm. It is found in the cell junction. It localises to the gap junction. Immediate-early protein playing a role in various cellular processes including proliferation, adhesion, migration, differentiation and survival. Acts by binding to integrins or membrane receptors such as NOTCH1. In Xenopus laevis (African clawed frog), this protein is CCN family member 3 (ccn3).